Consider the following 392-residue polypeptide: Queuine tRNA-ribosyltransferase (392 aa).

The active-site Proton acceptor is the Asp92. Residues 92–96 (DSGGF), Asp146, Gln188, and Gly215 contribute to the substrate site. The RNA binding stretch occupies residues 246-252 (GVGSPED). Asp265 (nucleophile) is an active-site residue. The segment at 270–274 (TRLGR) is RNA binding; important for wobble base 34 recognition. Cys303, Cys305, Cys308, and His334 together coordinate Zn(2+).

This sequence belongs to the queuine tRNA-ribosyltransferase family. Homodimer. Within each dimer, one monomer is responsible for RNA recognition and catalysis, while the other monomer binds to the replacement base PreQ1. Requires Zn(2+) as cofactor.

It catalyses the reaction 7-aminomethyl-7-carbaguanine + guanosine(34) in tRNA = 7-aminomethyl-7-carbaguanosine(34) in tRNA + guanine. It participates in tRNA modification; tRNA-queuosine biosynthesis. Its function is as follows. Catalyzes the base-exchange of a guanine (G) residue with the queuine precursor 7-aminomethyl-7-deazaguanine (PreQ1) at position 34 (anticodon wobble position) in tRNAs with GU(N) anticodons (tRNA-Asp, -Asn, -His and -Tyr). Catalysis occurs through a double-displacement mechanism. The nucleophile active site attacks the C1' of nucleotide 34 to detach the guanine base from the RNA, forming a covalent enzyme-RNA intermediate. The proton acceptor active site deprotonates the incoming PreQ1, allowing a nucleophilic attack on the C1' of the ribose to form the product. After dissociation, two additional enzymatic reactions on the tRNA convert PreQ1 to queuine (Q), resulting in the hypermodified nucleoside queuosine (7-(((4,5-cis-dihydroxy-2-cyclopenten-1-yl)amino)methyl)-7-deazaguanosine). The chain is Queuine tRNA-ribosyltransferase from Herpetosiphon aurantiacus (strain ATCC 23779 / DSM 785 / 114-95).